Reading from the N-terminus, the 860-residue chain is Spindle and centriole-associated protein 1 (860 aa).

3 disordered regions span residues 160 to 200 (ESVI…SQSN), 232 to 254 (QSQM…QKAA), and 293 to 330 (KQLL…SSSN). A Phosphothreonine modification is found at Thr-236. Over residues 236 to 249 (TASSGTPSSASPSG) the composition is skewed to low complexity. Residues 308–330 (PSKQKSSMLSASTASTDLPSSSN) are compositionally biased toward polar residues. The stretch at 383-437 (RYLKESELQLRKEVETRQRLEEALGDHRELIDALTAEVLFLREENTATQARLQQY) forms a coiled coil. Ser-646 is subject to Phosphoserine. The stretch at 729–755 (SSMEERIAELNRQSMEARGKLLQLIEQ) forms a coiled coil. Ser-765, Ser-769, and Ser-824 each carry phosphoserine. A disordered region spans residues 790–860 (IPGAEAPESS…GWFALSTHVS (71 aa)). Residues 808–824 (SGLNSRRSSGAASNSCS) show a composition bias toward low complexity.

In terms of assembly, interacts with CEP120.

The protein resides in the cytoplasm. It is found in the cytoskeleton. It localises to the microtubule organizing center. Its subcellular location is the centrosome. The protein localises to the centriole. The protein resides in the spindle. In terms of biological role, regulator required for centriole duplication. for proper bipolar spindle formation and chromosome congression in mitosis. The chain is Spindle and centriole-associated protein 1 (SPICE1) from Bos taurus (Bovine).